Reading from the N-terminus, the 466-residue chain is Phosphomethylpyrimidine synthase (466 aa).

Substrate-binding positions include Asn80, Met109, Tyr139, His175, 195–197, 236–239, and Glu275; these read SRG and DSLR. His279 lines the Zn(2+) pocket. Tyr302 is a binding site for substrate. Position 343 (His343) interacts with Zn(2+). Residues Cys423, Cys426, and Cys431 each coordinate [4Fe-4S] cluster.

It belongs to the ThiC family. The cofactor is [4Fe-4S] cluster.

It carries out the reaction 5-amino-1-(5-phospho-beta-D-ribosyl)imidazole + S-adenosyl-L-methionine = 4-amino-2-methyl-5-(phosphooxymethyl)pyrimidine + CO + 5'-deoxyadenosine + formate + L-methionine + 3 H(+). It functions in the pathway cofactor biosynthesis; thiamine diphosphate biosynthesis. In terms of biological role, catalyzes the synthesis of the hydroxymethylpyrimidine phosphate (HMP-P) moiety of thiamine from aminoimidazole ribotide (AIR) in a radical S-adenosyl-L-methionine (SAM)-dependent reaction. The protein is Phosphomethylpyrimidine synthase of Synechococcus sp. (strain RCC307).